Consider the following 360-residue polypeptide: Alpha-2-HS-glycoprotein (360 aa).

Residues Leu-1–Leu-15 form the signal peptide. Residues Tyr-24–Asp-130 enclose the Cystatin fetuin-A-type 1 domain. Intrachain disulfides connect Cys-29/Cys-351, Cys-86/Cys-97, Cys-111/Cys-129, Cys-143/Cys-146, Cys-205/Cys-216, and Cys-227/Cys-244. Asn-96 carries an N-linked (GlcNAc...) asparagine glycan. A Phosphoserine modification is found at Ser-131. Thr-132 carries the post-translational modification Phosphothreonine. Ser-135 is subject to Phosphoserine. One can recognise a Cystatin fetuin-A-type 2 domain in the interval Lys-141–Val-252. Residue Asn-153 is glycosylated (N-linked (GlcNAc...) asparagine). Residues Val-260–Ser-285 are disordered. Thr-312 is modified (phosphothreonine). A phosphoserine mark is found at Ser-318, Ser-321, and Ser-323.

Belongs to the fetuin family. Phosphorylated by FAM20C in the extracellular medium. In terms of tissue distribution, bone marrow.

The protein resides in the secreted. Its function is as follows. A cell adhesion protein that binds immature cells of the granulocyte lineage. In Oryctolagus cuniculus (Rabbit), this protein is Alpha-2-HS-glycoprotein (AHSG).